Reading from the N-terminus, the 440-residue chain is Transposon Ty1-MR1 Gag polyprotein (440 aa).

Composition is skewed to polar residues over residues methionine 1 to aspartate 31, valine 46 to serine 60, and valine 137 to histidine 168. Disordered regions lie at residues methionine 1–glutamine 88, valine 137–isoleucine 174, and glutamine 350–proline 424. The segment at asparagine 299–histidine 401 is RNA-binding. Residues serine 363–arginine 372 are compositionally biased toward basic and acidic residues. Over residues threonine 373–glycine 411 the composition is skewed to polar residues.

Homotrimer.

The protein localises to the cytoplasm. Functionally, capsid protein (CA) is the structural component of the virus-like particle (VLP), forming the shell that encapsulates the retrotransposons dimeric RNA genome. The particles are assembled from trimer-clustered units and there are holes in the capsid shells that allow for the diffusion of macromolecules. CA also has nucleocapsid-like chaperone activity, promoting primer tRNA(i)-Met annealing to the multipartite primer-binding site (PBS), dimerization of Ty1 RNA and initiation of reverse transcription. This Saccharomyces cerevisiae (strain ATCC 204508 / S288c) (Baker's yeast) protein is Transposon Ty1-MR1 Gag polyprotein (TY1A-MR1).